Consider the following 401-residue polypeptide: Acetate kinase (401 aa).

Residue Asn7 participates in Mg(2+) binding. Lys14 provides a ligand contact to ATP. Arg90 is a binding site for substrate. Asp147 functions as the Proton donor/acceptor in the catalytic mechanism. Residues 207-211 (HLGNG), 282-284 (DFR), and 330-334 (GVGEN) each bind ATP. Position 383 (Glu383) interacts with Mg(2+).

It belongs to the acetokinase family. Homodimer. Mg(2+) is required as a cofactor. Requires Mn(2+) as cofactor.

It is found in the cytoplasm. It catalyses the reaction acetate + ATP = acetyl phosphate + ADP. It functions in the pathway metabolic intermediate biosynthesis; acetyl-CoA biosynthesis; acetyl-CoA from acetate: step 1/2. Its function is as follows. Catalyzes the formation of acetyl phosphate from acetate and ATP. Can also catalyze the reverse reaction. The protein is Acetate kinase of Clostridium novyi (strain NT).